A 576-amino-acid chain; its full sequence is Eukaryotic translation initiation factor 2A (576 aa).

WD repeat units follow at residues 71–119 (LPAA…LVFS), 266–307 (DREG…VSII), 308–349 (PPAP…KKIT), and 351–396 (VEAA…MFYE). 2 disordered regions span residues 422 to 461 (SASL…QNST) and 475 to 505 (GSAN…NNKK). Over residues 475 to 486 (GSANKHVNSSRQ) the composition is skewed to polar residues.

This sequence belongs to the WD repeat EIF2A family.

It localises to the cytoplasm. Functionally, functions in the early steps of protein synthesis of a small number of specific mRNAs. Acts by directing the binding of methionyl-tRNAi to 40S ribosomal subunits. In contrast to the eIF-2 complex, it binds methionyl-tRNAi to 40S subunits in a codon-dependent manner, whereas the eIF-2 complex binds methionyl-tRNAi to 40S subunits in a GTP-dependent manner. This chain is Eukaryotic translation initiation factor 2A, found in Schizosaccharomyces pombe (strain 972 / ATCC 24843) (Fission yeast).